A 478-amino-acid chain; its full sequence is Glutamate--tRNA ligase 1 (478 aa).

Residues 10 to 20 carry the 'HIGH' region motif; it reads PSPTGFLHIGG. A 'KMSKS' region motif is present at residues 242–246; the sequence is KLSKR. Lysine 245 contacts ATP.

Belongs to the class-I aminoacyl-tRNA synthetase family. Glutamate--tRNA ligase type 1 subfamily. As to quaternary structure, monomer.

The protein resides in the cytoplasm. It carries out the reaction tRNA(Glu) + L-glutamate + ATP = L-glutamyl-tRNA(Glu) + AMP + diphosphate. Functionally, catalyzes the attachment of glutamate to tRNA(Glu) in a two-step reaction: glutamate is first activated by ATP to form Glu-AMP and then transferred to the acceptor end of tRNA(Glu). This chain is Glutamate--tRNA ligase 1, found in Orientia tsutsugamushi (strain Boryong) (Rickettsia tsutsugamushi).